The following is a 583-amino-acid chain: Sensor protein SrrB (583 aa).

Topologically, residues Met1–Lys11 are cytoplasmic. The helical transmembrane segment at Leu12–Ile32 threads the bilayer. The Extracellular portion of the chain corresponds to Thr33–Thr174. A helical transmembrane segment spans residues Ile175 to Leu195. Topologically, residues Ser196–Glu583 are cytoplasmic. Residues Ser197–Asp249 form the HAMP domain. A Histidine kinase domain is found at Asn366–Glu583. A Phosphohistidine; by autocatalysis modification is found at His369.

The protein resides in the cell membrane. The catalysed reaction is ATP + protein L-histidine = ADP + protein N-phospho-L-histidine.. Member of the two-component regulatory system SrrA/SrrB, which is involved in the global regulation of staphylococcal virulence factors in response to environmental oxygen levels as well as biofilm formation. Also plays an essential role in host-derived nitric oxide resistance by regulating hmp/flavohemoglobin, an enzyme that detoxifies nitric oxide by converting it to nitrate. Functions as a sensor protein kinase which is autophosphorylated at a histidine residue and transfers its phosphate group to SrrA. In turn, SrrA binds to the upstream promoter regions of the target genes to positively and negatively regulate their expression. The polypeptide is Sensor protein SrrB (srrB) (Staphylococcus aureus (strain Mu50 / ATCC 700699)).